We begin with the raw amino-acid sequence, 217 residues long: LSM12 homolog A (217 aa).

One can recognise a Sm domain in the interval 9–78 (VNAVNDCFSI…CSNVQVIKEC (70 aa)). The region spanning 86–184 (QKLNLEQVKM…IIKQFFNTRP (99 aa)) is the AD domain. Positions 185-217 (SPVPESGAAASTSSPSVSPTSSSLASGSPVPAN) are disordered. A compositionally biased stretch (low complexity) spans 190–217 (SGAAASTSSPSVSPTSSSLASGSPVPAN).

The protein belongs to the LSM12 family. In terms of assembly, component of the Atx2-tyf activator complex, composed of Atx2, tyf, pAbp, Lsm12a. Interacts with tyf, Atx2 and pAbp.

Component of the Atx2-tyf activator complex which functions in the circadian pacemaker neurons to activate the TYF-dependent translation of per and maintain 24 hour periodicity in circadian behaviors. Within the Atx2-tyf complex, likely to function as a molecular adapter which stabilizes the interaction between Atx2 and the translational regulator tyf. This is LSM12 homolog A from Drosophila melanogaster (Fruit fly).